Reading from the N-terminus, the 327-residue chain is Gibberellin 2-beta-dioxygenase 1 (327 aa).

In terms of domain architecture, Fe2OG dioxygenase spans 171–276 (QSDCLFRVNH…RLSMIYFCGP (106 aa)). 3 residues coordinate Fe cation: His200, Asp202, and His257. The active site involves Arg267.

The protein belongs to the iron/ascorbate-dependent oxidoreductase family. GA2OX subfamily. The cofactor is Fe cation. Predominantly expressed in roots, flowers, young fruits and seeds.

It catalyses the reaction gibberellin A1 + 2-oxoglutarate + O2 = gibberellin A8 + succinate + CO2. The protein operates within plant hormone biosynthesis; gibberellin biosynthesis. Its function is as follows. Catalyzes the 2-beta-hydroxylation of several biologically active gibberellins, leading to the homeostatic regulation of their endogenous level. Catabolism of gibberellins (GAs) plays a central role in plant development. Converts GA9/GA20 to GA51/GA29 and GA4/GA1 to GA34/GA8. In Pisum sativum (Garden pea), this protein is Gibberellin 2-beta-dioxygenase 1 (GA2OX1).